The chain runs to 187 residues: GTP cyclohydrolase 1 (187 aa).

3 residues coordinate Zn(2+): cysteine 78, histidine 81, and cysteine 149.

Belongs to the GTP cyclohydrolase I family. Toroid-shaped homodecamer, composed of two pentamers of five dimers.

The catalysed reaction is GTP + H2O = 7,8-dihydroneopterin 3'-triphosphate + formate + H(+). It functions in the pathway cofactor biosynthesis; 7,8-dihydroneopterin triphosphate biosynthesis; 7,8-dihydroneopterin triphosphate from GTP: step 1/1. In Wolinella succinogenes (strain ATCC 29543 / DSM 1740 / CCUG 13145 / JCM 31913 / LMG 7466 / NCTC 11488 / FDC 602W) (Vibrio succinogenes), this protein is GTP cyclohydrolase 1.